We begin with the raw amino-acid sequence, 234 residues long: tRNA (guanine-N(1)-)-methyltransferase (234 aa).

An S-adenosyl-L-methionine-binding site is contributed by glycine 113.

This sequence belongs to the RNA methyltransferase TrmD family. Homodimer.

The protein localises to the cytoplasm. The catalysed reaction is guanosine(37) in tRNA + S-adenosyl-L-methionine = N(1)-methylguanosine(37) in tRNA + S-adenosyl-L-homocysteine + H(+). Functionally, specifically methylates guanosine-37 in various tRNAs. This is tRNA (guanine-N(1)-)-methyltransferase from Gluconobacter oxydans (strain 621H) (Gluconobacter suboxydans).